The primary structure comprises 461 residues: MATFSRQEFFQQLLQGCLLPTVQQGLDQIWLLLTICFACRLLWRLGLPSYLKHASTVAGGFFSLYHFFQLHMVWVVLLSLLCYLVLFLCRHSSHRGVFLSVTILIYLLMGEMHMVDTVTWHKMRGAQMIVAMKAVSLGFDLDRGEVGAVPSPVEFMGYLYFVGTIVFGPWISFHSYLQAVQGRPLSRRWLKKVARSLALALLCLVLSTCVGPYLFPYFIPLDGDRLLRNKKRKARGTMVRWLRAYESAVSFHFSNYFVGFLSEATATLAGAGFTEEKDHLEWDLTVSRPLNVELPRSMVEVVTSWNLPMSYWLNNYVFKNALRLGTFSAVLVTYAASALLHGFSFHLAAVLLSLAFITYVEHVLRKRLAQILSACILSKRCLPDCSHRHRLGLGVRALNLLFGALAIFHLSYLGSLFDVDVDDTTEEQGYGMAYTVHKWSELSWASHWVTFGCWIFYRLIG.

The Cytoplasmic portion of the chain corresponds to 1–17 (MATFSRQEFFQQLLQGC). A helical membrane pass occupies residues 18 to 38 (LLPTVQQGLDQIWLLLTICFA). Topologically, residues 39–66 (CRLLWRLGLPSYLKHASTVAGGFFSLYH) are extracellular. A helical membrane pass occupies residues 67-87 (FFQLHMVWVVLLSLLCYLVLF). Residues 88 to 95 (LCRHSSHR) are Cytoplasmic-facing. Residues 96–116 (GVFLSVTILIYLLMGEMHMVD) traverse the membrane as a helical segment. Topologically, residues 117–152 (TVTWHKMRGAQMIVAMKAVSLGFDLDRGEVGAVPSP) are extracellular. A helical transmembrane segment spans residues 153-173 (VEFMGYLYFVGTIVFGPWISF). Topologically, residues 174 to 198 (HSYLQAVQGRPLSRRWLKKVARSLA) are cytoplasmic. Residues 199–219 (LALLCLVLSTCVGPYLFPYFI) form a helical membrane-spanning segment. Residues 220–252 (PLDGDRLLRNKKRKARGTMVRWLRAYESAVSFH) are Extracellular-facing. Residues 253–273 (FSNYFVGFLSEATATLAGAGF) form a helical membrane-spanning segment. Residues 274–337 (TEEKDHLEWD…SAVLVTYAAS (64 aa)) lie on the Cytoplasmic side of the membrane. A helical transmembrane segment spans residues 338 to 358 (ALLHGFSFHLAAVLLSLAFIT). Residue His-341 is part of the active site. The Extracellular portion of the chain corresponds to 359-396 (YVEHVLRKRLAQILSACILSKRCLPDCSHRHRLGLGVR). Residues 397-417 (ALNLLFGALAIFHLSYLGSLF) traverse the membrane as a helical segment. Topologically, residues 418-461 (DVDVDDTTEEQGYGMAYTVHKWSELSWASHWVTFGCWIFYRLIG) are cytoplasmic.

This sequence belongs to the membrane-bound acyltransferase family. Porcupine subfamily. Interacts with WNT1, WNT3, WNT3A, WNT4, WNT5A, WNT5B, WNT6, WNT7A and WNT7B. In terms of tissue distribution, expressed in brain, heart, kidney, liver, lung, muscle, spleen and testis. Isoform 4 is strongly expressed in kidney, liver, lung, spleen and testis. Isoform 1 is strongly expressed in brain, heart and muscle and poorly in kidney, liver, lung, spleen and testis.

It is found in the endoplasmic reticulum membrane. It catalyses the reaction [Wnt protein]-L-serine + (9Z)-hexadecenoyl-CoA = [Wnt protein]-O-(9Z)-hexadecenoyl-L-serine + CoA. Protein-serine O-palmitoleoyltransferase that acts as a key regulator of the Wnt signaling pathway by mediating the attachment of palmitoleate, a 16-carbon monounsaturated fatty acid (C16:1(9Z)), to Wnt proteins. Serine palmitoleoylation of WNT proteins is required for efficient binding to frizzled receptors. The chain is Protein-serine O-palmitoleoyltransferase porcupine from Mus musculus (Mouse).